Consider the following 486-residue polypeptide: uncharacterized protein (486 aa).

24 to 35 provides a ligand contact to NAD(+); it reads IVHLGFGAFHRA.

The protein belongs to the mannitol dehydrogenase family. UxuB subfamily.

This is an uncharacterized protein from Escherichia coli (strain K12).